Reading from the N-terminus, the 358-residue chain is MADNKVNLSINGQSKVPPGFRFHPTEEELLHYYLRKKVNSQKIDLDVIREVDLNKLEPWDIQEECRIGSTPQNDWYFFSHKDKKYPTGTRTNRATVAGFWKATGRDKIICSCVRRIGLRKTLVFYKGRAPHGQKSDWIMHEYRLDDTPMSNGYADVVTEDPMSYNEEGWVVCRVFRKKNYQKIDDCPKITLSSLPDDTEEEKGPTFHNTQNVTGLDHVLLYMDRTGSNICMPESQTTTQHQDDVLFMQLPSLETPKSESPVDQSFLTPSKLDFSPVQEKITERPVCSNWASLDRLVAWQLNNGHHNPCHRKSFDEEEENGDTMMQRWDLHWNNDDNVDLWSSFTESSSSLDPLLHLSV.

Positions 16–177 (VPPGFRFHPT…GWVVCRVFRK (162 aa)) constitute an NAC domain. A DNA-binding region spans residues 116-183 (IGLRKTLVFY…VFRKKNYQKI (68 aa)).

As to expression, stems and roots, specifically in interfascicular fibers (sclerenchyma), cells differentiating into vascular vessels (cambium), and xylem.

The protein resides in the nucleus. Transcriptional activator of genes involved in biosynthesis of secondary walls. Together with NST1, required for the secondary cell wall thickening and lignification of sclerenchymatous fibers and secondary xylem vessels (tracheary elements). Seems to repress the secondary cell wall thickening of xylary fibers. May also regulate the secondary cell wall lignification of other tissues. Binds to and activates the promoter of MYB46. This Arabidopsis thaliana (Mouse-ear cress) protein is NAC domain-containing protein 12.